Consider the following 72-residue polypeptide: Omega-conotoxin-like SVIA mutant 1 (72 aa).

The signal sequence occupies residues 1 to 22; that stretch reads MKLTCVVIVAVLLLTACQLITA. Residues 23–48 constitute a propeptide that is removed on maturation; sequence EDSRGAQKHRTLRSTARRSKSELTTR. Cystine bridges form between cysteine 49-cysteine 63, cysteine 56-cysteine 66, and cysteine 62-cysteine 71. Proline 55 is modified (4-hydroxyproline).

The protein belongs to the conotoxin O1 superfamily. As to expression, expressed by the venom duct.

The protein localises to the secreted. Functionally, omega-conotoxins act at presynaptic membranes, they bind and block voltage-gated calcium channels (Cav). The chain is Omega-conotoxin-like SVIA mutant 1 from Conus striatus (Striated cone).